The chain runs to 590 residues: V-type ATP synthase alpha chain (590 aa).

Residue 232–239 participates in ATP binding; the sequence is GPFGSGKT.

This sequence belongs to the ATPase alpha/beta chains family.

It carries out the reaction ATP + H2O + 4 H(+)(in) = ADP + phosphate + 5 H(+)(out). In terms of biological role, produces ATP from ADP in the presence of a proton gradient across the membrane. The V-type alpha chain is a catalytic subunit. The chain is V-type ATP synthase alpha chain from Thermoanaerobacter pseudethanolicus (strain ATCC 33223 / 39E) (Clostridium thermohydrosulfuricum).